Reading from the N-terminus, the 169-residue chain is N-alpha-acetyltransferase 50 (169 aa).

Residues 6-155 enclose the N-acetyltransferase domain; it reads IELGDVTPHN…DAHVLQKNLK (150 aa). Phosphothreonine is present on Thr12. Tyr31 contacts substrate. Lys34 and Lys37 each carry N6-acetyllysine. Tyr73 is a catalytic residue. Substrate is bound at residue Met75. Position 77 to 90 (77 to 90) interacts with acetyl-CoA; sequence LGCLAPYRRLGIGT. Tyr110 carries the post-translational modification Phosphotyrosine. His112 is a catalytic residue. 117-126 contacts CoA; it reads NESAIDFYRK. The tract at residues 138 to 141 is substrate; sequence YYKR. Lys140 is subject to N6-acetyllysine.

Belongs to the acetyltransferase family. GNAT subfamily. In terms of assembly, component of the N-terminal acetyltransferase E (NatE) complex at least composed of NAA10, NAA15 and NAA50. Interacts with NAA10. Interacts with NAA15. Predominantly interacts with NAA15 in the N-terminal acetyltransferase A complex (NatA complex); the interactions reduce the acetylation activity of the NatA complex. Component of the N-terminal acetyltransferase E (NatE)/HYPK complex at least composed of NAA10, NAA15, NAA50 and HYPK. Within the complex interacts with NAA15. Its capacity to interact with the NatA complex is reduced by HYPK. Interacts with NAA35.

It localises to the cytoplasm. The protein localises to the nucleus. It catalyses the reaction N-terminal L-methionyl-L-alanyl-[protein] + acetyl-CoA = N-terminal N(alpha)-acetyl-L-methionyl-L-alanyl-[protein] + CoA + H(+). It carries out the reaction N-terminal L-methionyl-L-seryl-[protein] + acetyl-CoA = N-terminal N(alpha)-acetyl-L-methionyl-L-seryl-[protein] + CoA + H(+). The enzyme catalyses N-terminal L-methionyl-L-valyl-[protein] + acetyl-CoA = N-terminal N(alpha)-acetyl-L-methionyl-L-valyl-[protein] + CoA + H(+). The catalysed reaction is N-terminal L-methionyl-L-threonyl-[protein] + acetyl-CoA = N-terminal N(alpha)-acetyl-L-methionyl-L-threonyl-[protein] + CoA + H(+). It catalyses the reaction N-terminal L-methionyl-L-lysyl-[protein] + acetyl-CoA = N-terminal N(alpha)-acetyl-L-methionyl-L-lysyl-[protein] + CoA + H(+). It carries out the reaction N-terminal L-methionyl-L-leucyl-[protein] + acetyl-CoA = N-terminal N(alpha)-acetyl-L-methionyl-L-leucyl-[protein] + CoA + H(+). The enzyme catalyses N-terminal L-methionyl-L-phenylalanyl-[protein] + acetyl-CoA = N-terminal N(alpha)-acetyl-L-methionyl-L-phenylalanyl-[protein] + CoA + H(+). The catalysed reaction is N-terminal L-methionyl-L-tyrosyl-[protein] + acetyl-CoA = N-terminal N(alpha)-acetyl-L-methionyl-L-tyrosyl-[protein] + CoA + H(+). In terms of biological role, N-alpha-acetyltransferase that acetylates the N-terminus of proteins that retain their initiating methionine. Has a broad substrate specificity: able to acetylate the initiator methionine of most peptides, except for those with a proline in second position. Also displays N-epsilon-acetyltransferase activity by mediating acetylation of the side chain of specific lysines on proteins. Autoacetylates in vivo. The relevance of N-epsilon-acetyltransferase activity is however unclear: able to acetylate H4 in vitro, but this result has not been confirmed in vivo. Component of N-alpha-acetyltransferase complexes containing NAA10 and NAA15, which has N-alpha-acetyltransferase activity. Does not influence the acetyltransferase activity of NAA10. However, it negatively regulates the N-alpha-acetyltransferase activity of the N-terminal acetyltransferase A complex (also called the NatA complex). The multiprotein complexes probably constitute the major contributor for N-terminal acetylation at the ribosome exit tunnel, with NAA10 acetylating all amino termini that are devoid of methionine and NAA50 acetylating other peptides. Required for sister chromatid cohesion during mitosis by promoting binding of CDCA5/sororin to cohesin: may act by counteracting the function of NAA10. The chain is N-alpha-acetyltransferase 50 from Mus musculus (Mouse).